The primary structure comprises 105 residues: ATP synthase subunit c (105 aa).

The next 3 membrane-spanning stretches (helical) occupy residues 3–23 (FLALFFLALVGVAFAYDGGMD), 32–52 (SILGAMIGLGIAAFGGAIGMG), and 78–98 (VAMAMIEAQVIYTLVFAIIAI).

This sequence belongs to the ATPase C chain family. As to quaternary structure, F-type ATPases have 2 components, F(1) - the catalytic core - and F(0) - the membrane proton channel. F(1) has five subunits: alpha(3), beta(3), gamma(1), delta(1), epsilon(1). F(0) has three main subunits: a(1), b(2) and c(10-14). The alpha and beta chains form an alternating ring which encloses part of the gamma chain. F(1) is attached to F(0) by a central stalk formed by the gamma and epsilon chains, while a peripheral stalk is formed by the delta and b chains.

The protein resides in the cell inner membrane. Its function is as follows. F(1)F(0) ATP synthase produces ATP from ADP in the presence of a proton or sodium gradient. F-type ATPases consist of two structural domains, F(1) containing the extramembraneous catalytic core and F(0) containing the membrane proton channel, linked together by a central stalk and a peripheral stalk. During catalysis, ATP synthesis in the catalytic domain of F(1) is coupled via a rotary mechanism of the central stalk subunits to proton translocation. Functionally, key component of the F(0) channel; it plays a direct role in translocation across the membrane. A homomeric c-ring of between 10-14 subunits forms the central stalk rotor element with the F(1) delta and epsilon subunits. In Helicobacter acinonychis (strain Sheeba), this protein is ATP synthase subunit c.